The chain runs to 141 residues: Large ribosomal subunit protein uL16 (141 aa).

It belongs to the universal ribosomal protein uL16 family. In terms of assembly, part of the 50S ribosomal subunit. Contacts the CTC protein (RL25).

Functionally, binds the 5S and 23S rRNAs and is also seen to make contacts with the A and P site tRNAs. Interacts with A site tRNA mimics, and is probably one of the key factors, along with a helix of the 23S rRNA, in positioning tRNA stems in the peptidyl-transferase center. The sequence is that of Large ribosomal subunit protein uL16 (rplP) from Deinococcus radiodurans (strain ATCC 13939 / DSM 20539 / JCM 16871 / CCUG 27074 / LMG 4051 / NBRC 15346 / NCIMB 9279 / VKM B-1422 / R1).